The primary structure comprises 479 residues: Spindly-like protein spdl-1 (479 aa).

3 coiled-coil regions span residues 4–180 (DEEK…EGEL), 210–250 (EEDL…RFNV), and 321–357 (LMKD…KCAH).

In terms of assembly, interacts with Zwilch homolog zwl-1, a component of the RZZ complex. Interacts with mdf-1 and mdf-2.

Its subcellular location is the chromosome. It is found in the centromere. It localises to the kinetochore. The protein localises to the cytoplasm. The protein resides in the cytoskeleton. Its subcellular location is the spindle pole. Functionally, transient kinetochore component required for chromosome and spindle pole alignment and chromosome segregation during mitosis. Functions downstream of the RZZ complex to mediate kinetochore-microtubule attachments and nuclear envelope breakdown during cell division. Required for kinetochore assembly and localizes the checkpoint proteins mdf-1 and mdf-2, dynein and dynactin to unattached kinetochores. Dynein is believed to control the initial lateral interaction between the kinetochore and spindle microtubules and to facilitate the subsequent formation of end-on kinetochore-microtubule attachments mediated by the NDC80 complex. Required for embryonic development. The chain is Spindly-like protein spdl-1 from Caenorhabditis elegans.